The primary structure comprises 687 residues: Triadin (687 aa).

The Cytoplasmic segment spans residues 1–47; the sequence is MTEITAEGNASITTTVIDNKNGSVPKSPGKVLKRTVTEDIVTTFSSP. A helical transmembrane segment spans residues 48 to 68; that stretch reads AAWLLVIALIITWSAVAIVMF. The Lumenal portion of the chain corresponds to 69 to 687; the sequence is DLVDYKNFSA…NSPGQKQQEQ (619 aa). Residues 117 to 130 are compositionally biased toward acidic residues; sequence DGDEDDEDADEDID. 3 disordered regions span residues 117 to 265, 280 to 643, and 660 to 687; these read DGDE…EQKD, GDLK…QKSP, and FQFPVTPVQHSGENPGKSNSPGQKQQEQ. Positions 131–265 are enriched in basic and acidic residues; it reads KGEIEEPPLK…PAVPKHEQKD (135 aa). The segment covering 295 to 306 has biased composition (polar residues); that stretch reads LTASRPALSTPS. A phosphoserine mark is found at S303 and S306. The span at 307–356 shows a compositional bias: basic and acidic residues; that stretch reads LEEKEKEEKKKVEKKVTSDTKKKEKGEAKKKSEKETVIDGKGKEPGKPPE. Positions 357-370 are enriched in low complexity; the sequence is TKQTTTKLTTQAAA. Basic and acidic residues-rich tracts occupy residues 371-390, 396-431, 442-459, and 466-501; these read TKDEKKEDSKKMKKPPEEKP, EKKEKHIEPAKTPKKEHPAPSEKHRKAKAEQAKEEI, GKKEEKAKTVEQGKDVKP, and LKKEEKSEPQPKKEVKLETQLKKEEKSEPQVKKEAK. N-linked (GlcNAc...) asparagine glycosylation occurs at N514. Basic and acidic residues-rich tracts occupy residues 539 to 583 and 594 to 630; these read TAEK…KVPP and TRAEKRGKISKDSKDAPAPKKDKDSKDVLHSKKDKEV. Polar residues-rich tracts occupy residues 631 to 643 and 667 to 687; these read TNNVSSPKKQKSP and VQHSGENPGKSNSPGQKQQEQ.

As to quaternary structure, homooligomer of variable subunit number; disulfide-linked. Interacts with CASQ1 in skeletal muscle. Interacts with CASQ2. Interacts with RYR1 in skeletal muscle. In terms of processing, phosphorylated by CaMK2. N-glycosylated. In terms of tissue distribution, detected in skeletal muscle (at protein level). Detected in skeletal muscle.

It is found in the sarcoplasmic reticulum membrane. The protein localises to the microsome. It localises to the cell membrane. Its subcellular location is the sarcolemma. Contributes to the regulation of lumenal Ca2+ release via the sarcoplasmic reticulum calcium release channels RYR1 and RYR2, a key step in triggering skeletal and heart muscle contraction. Required for normal organization of the triad junction, where T-tubules and the sarcoplasmic reticulum terminal cisternae are in close contact. Required for normal skeletal muscle strength. Plays a role in excitation-contraction coupling in the heart and in regulating the rate of heart beats. The protein is Triadin of Rattus norvegicus (Rat).